A 366-amino-acid chain; its full sequence is UDP-N-acetylglucosamine--N-acetylmuramyl-(pentapeptide) pyrophosphoryl-undecaprenol N-acetylglucosamine transferase (366 aa).

Residues 10–12 (TGG), N124, R165, S192, I247, and Q292 contribute to the UDP-N-acetyl-alpha-D-glucosamine site.

The protein belongs to the glycosyltransferase 28 family. MurG subfamily.

It localises to the cell inner membrane. The catalysed reaction is di-trans,octa-cis-undecaprenyl diphospho-N-acetyl-alpha-D-muramoyl-L-alanyl-D-glutamyl-meso-2,6-diaminopimeloyl-D-alanyl-D-alanine + UDP-N-acetyl-alpha-D-glucosamine = di-trans,octa-cis-undecaprenyl diphospho-[N-acetyl-alpha-D-glucosaminyl-(1-&gt;4)]-N-acetyl-alpha-D-muramoyl-L-alanyl-D-glutamyl-meso-2,6-diaminopimeloyl-D-alanyl-D-alanine + UDP + H(+). It participates in cell wall biogenesis; peptidoglycan biosynthesis. In terms of biological role, cell wall formation. Catalyzes the transfer of a GlcNAc subunit on undecaprenyl-pyrophosphoryl-MurNAc-pentapeptide (lipid intermediate I) to form undecaprenyl-pyrophosphoryl-MurNAc-(pentapeptide)GlcNAc (lipid intermediate II). In Geotalea daltonii (strain DSM 22248 / JCM 15807 / FRC-32) (Geobacter daltonii), this protein is UDP-N-acetylglucosamine--N-acetylmuramyl-(pentapeptide) pyrophosphoryl-undecaprenol N-acetylglucosamine transferase.